We begin with the raw amino-acid sequence, 140 residues long: Large ribosomal subunit protein uL11 (140 aa).

Belongs to the universal ribosomal protein uL11 family. In terms of assembly, part of the ribosomal stalk of the 50S ribosomal subunit. Interacts with L10 and the large rRNA to form the base of the stalk. L10 forms an elongated spine to which L12 dimers bind in a sequential fashion forming a multimeric L10(L12)X complex. One or more lysine residues are methylated.

In terms of biological role, forms part of the ribosomal stalk which helps the ribosome interact with GTP-bound translation factors. This Syntrophobacter fumaroxidans (strain DSM 10017 / MPOB) protein is Large ribosomal subunit protein uL11.